Reading from the N-terminus, the 357-residue chain is Protein RecA (357 aa).

73–80 contacts ATP; sequence GPESSGKT.

Belongs to the RecA family.

The protein resides in the cytoplasm. Functionally, can catalyze the hydrolysis of ATP in the presence of single-stranded DNA, the ATP-dependent uptake of single-stranded DNA by duplex DNA, and the ATP-dependent hybridization of homologous single-stranded DNAs. It interacts with LexA causing its activation and leading to its autocatalytic cleavage. The sequence is that of Protein RecA from Methylibium petroleiphilum (strain ATCC BAA-1232 / LMG 22953 / PM1).